The primary structure comprises 184 residues: Adenylate kinase (184 aa).

Residue 12 to 17 coordinates ATP; the sequence is GAGKGT. Positions 32 to 61 are NMP; sequence STGELLRKEIDLDTDLGKQVKDIMNRGELV. AMP contacts are provided by residues Thr33, Arg38, 59 to 61, 85 to 88, and Gln92; these read ELV and GYPR. The segment at 126–132 is LID; that stretch reads IRGRKDD. ATP is bound at residue Arg127. Residues Arg129 and Arg140 each coordinate AMP. Gly168 is a binding site for ATP.

This sequence belongs to the adenylate kinase family. Monomer.

The protein resides in the cytoplasm. The catalysed reaction is AMP + ATP = 2 ADP. Its pathway is purine metabolism; AMP biosynthesis via salvage pathway; AMP from ADP: step 1/1. Its function is as follows. Catalyzes the reversible transfer of the terminal phosphate group between ATP and AMP. Plays an important role in cellular energy homeostasis and in adenine nucleotide metabolism. In Prochlorococcus marinus subsp. pastoris (strain CCMP1986 / NIES-2087 / MED4), this protein is Adenylate kinase.